The chain runs to 374 residues: Proteasomal ubiquitin receptor ADRM1 homolog (374 aa).

A Pru domain is found at 13-131 (SSSGHIVEFK…KKVTDALNKP (119 aa)). Disordered regions lie at residues 126–166 (DALN…MNAP), 187–223 (SDTLPISSVPRGEDASSEADCEPSTNAAEEGSSNPLS), and 334–374 (ANLT…MDVD). 2 stretches are compositionally biased toward polar residues: residues 141-163 (SAGSNANTDRQSAGGSLISSSDM) and 209-223 (PSTNAAEEGSSNPLS). The DEUBAD domain occupies 239–346 (SQKKEVAVSL…TKAEGGEDAA (108 aa)). Over residues 354-368 (DATREPEPKRNRPDN) the composition is skewed to basic and acidic residues.

It belongs to the ADRM1 family. As to quaternary structure, component of the 19S proteasome regulatory particle complex. The 26S proteasome consists of a 20S core particle (CP) and two 19S regulatory subunits (RP). Interacts with deubiquitinase ubh-4.

The protein resides in the cytoplasm. The protein localises to the nucleus. May function as a proteasomal ubiquitin receptor. May promote the deubiquitinating activity associated with the 26S proteasome. The protein is Proteasomal ubiquitin receptor ADRM1 homolog of Caenorhabditis elegans.